Here is a 445-residue protein sequence, read N- to C-terminus: Histamine H3 receptor (445 aa).

Topologically, residues 1 to 40 (MERAPPDGLMNASGALAGEAAAAAGGARTFSAAWTAVLAA) are extracellular. An N-linked (GlcNAc...) asparagine glycan is attached at asparagine 11. Residues 41–61 (LMALLIVATVLGNALVMLAFV) traverse the membrane as a helical segment. Residues 62-71 (ADSSLRTQNN) are Cytoplasmic-facing. Residues 72–92 (FFLLNLAISDFLVGVFCIPLY) traverse the membrane as a helical segment. Residues 93–109 (VPYVLTGRWTFGRGLCK) lie on the Extracellular side of the membrane. Residues cysteine 108 and cysteine 189 are joined by a disulfide bond. Residues 110 to 130 (LWLVVDYLLCTSSVFNIVLIS) form a helical membrane-spanning segment. Residues 131 to 157 (YDRFLSVTRAVSYRAQQGDTRRAVRKM) are Cytoplasmic-facing. The helical transmembrane segment at 158 to 178 (VLVWVLAFLLYGPAILSWEYL) threads the bilayer. Topologically, residues 179–197 (SGGSSIPEGHCYAEFFYNW) are extracellular. The helical transmembrane segment at 198–218 (YFLITASTLEFFTPFLSVTFF) threads the bilayer. Residues 219–359 (NLSIYLNIQR…LSRDKKVAKS (141 aa)) are Cytoplasmic-facing. 2 disordered regions span residues 236-264 (GGAR…WGCW) and 288-336 (AGEA…LEKR). The span at 299–312 (AAASPTSSSGSSSR) shows a compositional bias: low complexity. The chain crosses the membrane as a helical span at residues 360–380 (LAIIVSIFGLCWAPYTLLMII). At 381–398 (RAACHGHCVPDYWYETSF) the chain is on the extracellular side. The chain crosses the membrane as a helical span at residues 399–419 (WLLWANSAVNPVLYPLCHYSF). Topologically, residues 420–445 (RRAFTKLLCPQKLKVQPHSSLEHCWK) are cytoplasmic. Residue serine 439 is modified to Phosphoserine.

This sequence belongs to the G-protein coupled receptor 1 family. As to expression, expressed widely and abundantly throughout the brain. Highly expressed in discrete neuronal populations such as pyramidal cells in cerebral cortex or cerebellar Purkinje cells.

The protein localises to the cell membrane. Functionally, the H3 subclass of histamine receptors could mediate the histamine signals in CNS and peripheral nervous system. Signals through the inhibition of adenylate cyclase and displays high constitutive activity (spontaneous activity in the absence of agonist). In Cavia porcellus (Guinea pig), this protein is Histamine H3 receptor (HRH3).